A 508-amino-acid chain; its full sequence is MDVLVGCSTGINKIYNIHKKTPTGLYGALNTTSELNVMTFGWNSVENNEDYVFYGYSNGILKYWNQKEKQLIGEIDYGQSIKAIHPLNNDKLLVALENGLVDVKTLTAPITTQLAPMNLPTLNKKKSPAAAAAASTVGKNNKSKQVIVEPVNTQSFSLNVATNLSGFAMNPSNDKFAFGGKDVNLTIWDLEKQVKTYSAKFKHDFLNLQEPVSINVVKYMNDDKILIGSDFRIKAYDLRSKTNRSSFLDVSFSKHPIQSIQYTNQKEHYFYASDSIGKVFCYDVRTSRQVGSFKDSAGSVKDIAIHPTLPLLATVGLDRHLRVYNLDNRKMLHKIFLKQRLSCVLFSKEEPTNEIAQEEEEIWKNLEENKNRINNDDNDDNNEGNDKKKSISIKVTDNMDSDDDIEDGDDNDVEFPMEADSDDSDFDLGNSDDDNISVKKENKGDSDDSDDDSDEDEKPKRKTPAKSNLRNNNNNNNKGKNNKGKNNSSTKKTSQVLKKKFAGLKKRK.

WD repeat units lie at residues 32–74, 159–198, 252–292, and 295–334; these read TSEL…LIGE, NVATNLSGFAMNPSNDKFAFGGKDVNLTIWDLEKQVKTYS, FSKH…QVGS, and DSAGSVKDIAIHPTLPLLATVGLDRHLRVYNLDNRKMLHK. A disordered region spans residues 368-508; that stretch reads ENKNRINNDD…KKFAGLKKRK (141 aa). A compositionally biased stretch (acidic residues) spans 399-435; the sequence is MDSDDDIEDGDDNDVEFPMEADSDDSDFDLGNSDDDN. Residues 436–446 are compositionally biased toward basic and acidic residues; that stretch reads ISVKKENKGDS. A compositionally biased stretch (acidic residues) spans 447–456; it reads DDSDDDSDED. Positions 471–493 are enriched in low complexity; it reads NNNNNNNKGKNNKGKNNSSTKKT. Residues 497–508 show a composition bias toward basic residues; sequence LKKKFAGLKKRK.

This Dictyostelium discoideum (Social amoeba) protein is WD repeat-containing protein DDB_G0290555.